Consider the following 414-residue polypeptide: Multifunctional CCA protein (414 aa).

2 residues coordinate ATP: Gly8 and Arg11. Residues Gly8 and Arg11 each contribute to the CTP site. The Mg(2+) site is built by Asp21 and Asp23. ATP contacts are provided by Arg91, Arg137, and Arg140. 3 residues coordinate CTP: Arg91, Arg137, and Arg140. Residues 226-327 enclose the HD domain; it reads TGVHVMMVVD…VTLFERCDAF (102 aa).

It belongs to the tRNA nucleotidyltransferase/poly(A) polymerase family. Bacterial CCA-adding enzyme type 1 subfamily. As to quaternary structure, monomer. Can also form homodimers and oligomers. Requires Mg(2+) as cofactor. It depends on Ni(2+) as a cofactor.

The catalysed reaction is a tRNA precursor + 2 CTP + ATP = a tRNA with a 3' CCA end + 3 diphosphate. It catalyses the reaction a tRNA with a 3' CCA end + 2 CTP + ATP = a tRNA with a 3' CCACCA end + 3 diphosphate. Its function is as follows. Catalyzes the addition and repair of the essential 3'-terminal CCA sequence in tRNAs without using a nucleic acid template. Adds these three nucleotides in the order of C, C, and A to the tRNA nucleotide-73, using CTP and ATP as substrates and producing inorganic pyrophosphate. tRNA 3'-terminal CCA addition is required both for tRNA processing and repair. Also involved in tRNA surveillance by mediating tandem CCA addition to generate a CCACCA at the 3' terminus of unstable tRNAs. While stable tRNAs receive only 3'-terminal CCA, unstable tRNAs are marked with CCACCA and rapidly degraded. The sequence is that of Multifunctional CCA protein from Herminiimonas arsenicoxydans.